Reading from the N-terminus, the 509-residue chain is Polyadenylation factor subunit 2 (509 aa).

7 WD repeats span residues 72 to 109 (YIHTSANKARHVINVVRWTPDGRRLLTGSSTGEFTLWN), 113 to 151 (FNFELINQSHDYAVRCAEWSTDGRWLISGDGGGMVKYFE), 156 to 192 (NVKIVQAHEMEVRDVAFSPNDSKFVTASDDGSLKVWN), 196 to 234 (STEELKLTGHGWDVKTVDWHPSKGLLASGSKDNLVKFWD), 238 to 278 (GTCI…RVFD), 282 to 321 (MKDVRVLRGHEKDVNCVTWHPLYPNLLTTGGSDGSVNHYS), and 350 to 388 (YPTAEIPFAHDLGIWSMQYHPLGHLLCTGSNDKTTRFWS). Disordered regions lie at residues 385–409 (RFWSRSRPDDKESTMDRHHLGEEQS) and 480–509 (SNSYAEPSTQNSFIPGLTSKSQDGYPQNYR). Residues 390–406 (SRPDDKESTMDRHHLGE) show a composition bias toward basic and acidic residues.

The protein localises to the nucleus. Functionally, required for 3'-end cleavage and polyadenylation of pre-mRNAs. Also involved in chromosome segregation where it has a role in chromosome attachment to the mitotic spindle. This is Polyadenylation factor subunit 2 (pfs2) from Schizosaccharomyces pombe (strain 972 / ATCC 24843) (Fission yeast).